Here is a 208-residue protein sequence, read N- to C-terminus: Thymidylate kinase (208 aa).

10-17 (GLEGAGKT) contacts ATP.

Belongs to the thymidylate kinase family.

The enzyme catalyses dTMP + ATP = dTDP + ADP. In terms of biological role, phosphorylation of dTMP to form dTDP in both de novo and salvage pathways of dTTP synthesis. This Actinobacillus pleuropneumoniae serotype 5b (strain L20) protein is Thymidylate kinase.